A 182-amino-acid chain; its full sequence is Troponin I, fast skeletal muscle (182 aa).

The residue at position 2 (Gly2) is an N-acetylglycine. Positions 2 to 48 (GDEEKRNRAITARRQHLKSVMLQIAATELEKEESRRESEKQNYLSEH) are involved in binding TNC. A Phosphothreonine modification is found at Thr12. Residues 29-41 (ELEKEESRRESEK) show a composition bias toward basic and acidic residues. A disordered region spans residues 29–53 (ELEKEESRRESEKQNYLSEHCPPLH). Residues 97–117 (NQKLFDLRGKFKRPPLRRVRM) form an involved in binding TNC and actin region. A Phosphoserine modification is found at Ser118.

This sequence belongs to the troponin I family. In terms of assembly, binds to actin and tropomyosin.

Its function is as follows. Troponin I is the inhibitory subunit of troponin, the thin filament regulatory complex which confers calcium-sensitivity to striated muscle actomyosin ATPase activity. The chain is Troponin I, fast skeletal muscle (Tnni2) from Rattus norvegicus (Rat).